We begin with the raw amino-acid sequence, 632 residues long: Extracellular metalloproteinase 5 (632 aa).

A signal peptide spans 1-20; it reads MHGLLLAAGLLSLPLHVLAH. The propeptide occupies 21–244; it reads PQPGTSLAGR…HNVVDYVSHA (224 aa). The N-linked (GlcNAc...) asparagine glycan is linked to N284. H427 provides a ligand contact to Zn(2+). E428 is a catalytic residue. H431 provides a ligand contact to Zn(2+). 2 N-linked (GlcNAc...) asparagine glycosylation sites follow: N591 and N620.

It belongs to the peptidase M36 family. Zn(2+) serves as cofactor.

The protein resides in the secreted. Its function is as follows. Secreted metalloproteinase probably acting as a virulence factor. The chain is Extracellular metalloproteinase 5 (MEP5) from Arthroderma otae (strain ATCC MYA-4605 / CBS 113480) (Microsporum canis).